A 252-amino-acid polypeptide reads, in one-letter code: Pimeloyl-[acyl-carrier protein] methyl ester esterase (252 aa).

The 225-residue stretch at 15–239 (LVMLHGWAMH…FPHCGHAPFL (225 aa)) folds into the AB hydrolase-1 domain. Residues W21, 81 to 82 (SL), and 143 to 147 (FLTLQ) contribute to the substrate site. S81 acts as the Nucleophile in catalysis. Residues D207 and H235 contribute to the active site. H235 serves as a coordination point for substrate.

It belongs to the AB hydrolase superfamily. Carboxylesterase BioH family. In terms of assembly, monomer.

It is found in the cytoplasm. It carries out the reaction 6-carboxyhexanoyl-[ACP] methyl ester + H2O = 6-carboxyhexanoyl-[ACP] + methanol + H(+). Its pathway is cofactor biosynthesis; biotin biosynthesis. The physiological role of BioH is to remove the methyl group introduced by BioC when the pimeloyl moiety is complete. It allows to synthesize pimeloyl-ACP via the fatty acid synthetic pathway through the hydrolysis of the ester bonds of pimeloyl-ACP esters. The protein is Pimeloyl-[acyl-carrier protein] methyl ester esterase of Nitrosomonas europaea (strain ATCC 19718 / CIP 103999 / KCTC 2705 / NBRC 14298).